We begin with the raw amino-acid sequence, 153 residues long: Lipoprotein signal peptidase (153 aa).

The next 2 helical transmembrane spans lie at 61–81 (YFFV…LVKN) and 85–105 (SLWL…NFID). Residues D114 and D130 contribute to the active site. The helical transmembrane segment at 125-145 (IFNVADSYLTVGVLLLILILW) threads the bilayer.

The protein belongs to the peptidase A8 family.

It localises to the cell membrane. The enzyme catalyses Release of signal peptides from bacterial membrane prolipoproteins. Hydrolyzes -Xaa-Yaa-Zaa-|-(S,diacylglyceryl)Cys-, in which Xaa is hydrophobic (preferably Leu), and Yaa (Ala or Ser) and Zaa (Gly or Ala) have small, neutral side chains.. It participates in protein modification; lipoprotein biosynthesis (signal peptide cleavage). This protein specifically catalyzes the removal of signal peptides from prolipoproteins. The polypeptide is Lipoprotein signal peptidase (Streptococcus thermophilus (strain CNRZ 1066)).